The primary structure comprises 160 residues: Crossover junction endodeoxyribonuclease RuvC (160 aa).

Active-site residues include aspartate 7, glutamate 70, and aspartate 142. Residues aspartate 7, glutamate 70, and aspartate 142 each coordinate Mg(2+).

Belongs to the RuvC family. As to quaternary structure, homodimer which binds Holliday junction (HJ) DNA. The HJ becomes 2-fold symmetrical on binding to RuvC with unstacked arms; it has a different conformation from HJ DNA in complex with RuvA. In the full resolvosome a probable DNA-RuvA(4)-RuvB(12)-RuvC(2) complex forms which resolves the HJ. It depends on Mg(2+) as a cofactor.

Its subcellular location is the cytoplasm. It catalyses the reaction Endonucleolytic cleavage at a junction such as a reciprocal single-stranded crossover between two homologous DNA duplexes (Holliday junction).. Functionally, the RuvA-RuvB-RuvC complex processes Holliday junction (HJ) DNA during genetic recombination and DNA repair. Endonuclease that resolves HJ intermediates. Cleaves cruciform DNA by making single-stranded nicks across the HJ at symmetrical positions within the homologous arms, yielding a 5'-phosphate and a 3'-hydroxyl group; requires a central core of homology in the junction. The consensus cleavage sequence is 5'-(A/T)TT(C/G)-3'. Cleavage occurs on the 3'-side of the TT dinucleotide at the point of strand exchange. HJ branch migration catalyzed by RuvA-RuvB allows RuvC to scan DNA until it finds its consensus sequence, where it cleaves and resolves the cruciform DNA. This is Crossover junction endodeoxyribonuclease RuvC from Ehrlichia ruminantium (strain Gardel).